A 744-amino-acid chain; its full sequence is MTFTFTALLCLGLTLGLWIPVLTGSLPKPILRVQPDSVVSMGTTVTFICEETIGAKQSYLYRNGNLQRRVPKNNQKPTNKTEFLFLNVGHQNAGQYHCSYKSQGKSSDYSEPLELVVTGAYSKPSLSAQTNPVVTSGGYVTLKCEPSHYGHTLILTVEGPQKLSWRQDPQCNYYTENCHVLFYVGPLTSNQRWIFRCYSYETNTPQVWSAPSEPVEILVSGKLQKPTIKAEPGSVIHSGKAMIIWCQGDLDAEIYFLHKEGSHNTQSTQTLQQPGNKAKLFIRPVTQGHAGDYRCYYYSSAGWSEPSDTLELVVTGIYNYHPLMLSGPPSPVVPEGGNVTLHCTSHRYYDKFILIKEDQKFSSSLDTKYISSTGQHQALFVMGPMTPNYSGTFRCYGYYKHTPQLWSEPSNLLKILITGQLHHVLFLSVMPNSTVHSGENVTLMCWSTYSVDTFILSKEGSGQPPLRLKSKIQDQQYQSEFSMSGVTSKLSGTYRCYGSHDSSLYLLSFASAPVELIVSGPIRTSDLPPTMSIPPDGLQRYLKALIGVSVAFLLFLFILIFILLRRRHQEKFRKDDEDAQKGKELQLSTGAAEPVTRDRGHQKRSNPAAATQEESLYASVEDMETKDGVELDTWKPPEGDPQGETYAQVEPSRLRRAGAISPVVSREQLNTKYEQAEEGQEVDSQATESEEPQDVTYAQLCSRTLRQGTAAPPLSQAGEAPEEPSVYAALATARPGAVPKNKKQ.

The signal sequence occupies residues 1–24; the sequence is MTFTFTALLCLGLTLGLWIPVLTG. The Extracellular portion of the chain corresponds to 25–543; the sequence is SLPKPILRVQ…PPDGLQRYLK (519 aa). Ig-like C2-type domains lie at 26–119, 121–221, 223–316, 320–419, and 426–520; these read LPKP…VVTG, YSKP…LVSG, LQKP…VVTG, YHPL…LITG, and FLSV…IVSG. Intrachain disulfides connect C49/C98, C144/C197, and C246/C295. N-linked (GlcNAc...) asparagine glycosylation is present at N79. A glycan (N-linked (GlcNAc...) asparagine) is linked at N338. C343 and C395 are joined by a disulfide. The N-linked (GlcNAc...) asparagine glycan is linked to N440. C445 and C496 form a disulfide bridge. A helical membrane pass occupies residues 544–564; the sequence is ALIGVSVAFLLFLFILIFILL. Over 565–744 the chain is Cytoplasmic; it reads RRRHQEKFRK…PGAVPKNKKQ (180 aa). The span at 572–584 shows a compositional bias: basic and acidic residues; the sequence is FRKDDEDAQKGKE. Disordered stretches follow at residues 572-617, 630-652, and 667-744; these read FRKD…ESLY, ELDTWKPPEGDPQGETYAQVEPS, and EQLN…NKKQ. Residues 615–620 carry the ITIM motif 1 motif; that stretch reads SLYASV. 2 consecutive short sequence motifs (ITIM motif) follow at residues 695 to 700 and 725 to 730; these read VTYAQL and SVYAAL. 2 positions are modified to phosphotyrosine; by LYN: Y697 and Y727.

Interacts with LYN, PTPN6/SHP-1 and PTPN11/SHP-2. In terms of processing, phosphorylated on tyrosine residues by LYN. Phosphorylation at Tyr-697 and Tyr-727 is important for interaction with PTPN6/SHP-1 and PTPN11/SHP-2.

The protein resides in the cell membrane. Its function is as follows. May act as receptor for class I MHC antigens. Becomes activated upon coligation with immune receptors, such as FCGR2B and the B-cell receptor. Down-regulates antigen-induced B-cell activation by recruiting phosphatases to its immunoreceptor tyrosine-based inhibitor motifs (ITIM). The polypeptide is Leukocyte immunoglobulin-like receptor subfamily B member 3A (Rattus norvegicus (Rat)).